The sequence spans 1920 residues: rRNA biogenesis protein RRP5 (1920 aa).

The tract at residues 1 to 65 (MVVPQKKFAN…GTSLSKKERE (65 aa)) is disordered. S1 motif domains lie at 128-210 (GMKL…LSLR), 226-291 (GMVF…LSSD), 314-384 (GMMV…LTLS), 400-473 (GDIF…GTLK), 490-557 (GMVT…VTYK), 577-646 (GLVT…LSFM), 661-733 (GSIV…LSSK), 753-822 (NSVV…LSLK), 866-930 (GSLI…LSLR), 958-1031 (EVHQ…LLLD), 1054-1129 (GSVV…LSVK), 1153-1224 (GQCV…LVQR), 1260-1334 (GDIL…LSLR), 1369-1438 (DMGV…VTLK), and 1459-1529 (GDMI…LGMK). Disordered regions lie at residues 1535–1555 (NGDD…ECDP) and 1605–1652 (TDFD…LEHH). The segment covering 1620–1652 (NKDEKSKRREKQKDKEEREKKIQAAEGRLLEHH) has biased composition (basic and acidic residues). HAT repeat units lie at residues 1651-1683 (HHAP…FMLS), 1685-1722 (ADIE…LENE), 1726-1758 (PPEE…YERT), 1759-1791 (EQYK…SSLK), 1828-1860 (GVAD…QEIR), and 1862-1897 (GEDD…YEKS).

In terms of tissue distribution, highly expressed in flowers and at lower levels in roots, leaves, stems and siliques.

The protein localises to the nucleus. It is found in the nucleolus. Its function is as follows. Involved in the biogenesis of ribosomal RNA (rRNA). Required for the formation of 5.8S rRNA. Required for normal development of female gametophytes. This is rRNA biogenesis protein RRP5 from Arabidopsis thaliana (Mouse-ear cress).